The sequence spans 428 residues: ATP-dependent RNA helicase RhlB (428 aa).

The short motif at 9–37 is the Q motif element; sequence KKFSDFALHPKVIEALDNKGFSNCTPIQA. The 180-residue stretch at 40–219 folds into the Helicase ATP-binding domain; sequence LPFTVEGRDV…FEQMNHAEYI (180 aa). 53-60 contributes to the ATP binding site; the sequence is AQTGTGKT. The DEAD box motif lies at 165–168; that stretch reads DEAD. Positions 245-390 constitute a Helicase C-terminal domain; sequence RLLQTLLEEE…VSKYNSQALL (146 aa). The disordered stretch occupies residues 392–428; the sequence is DLPAPKRRYRSRSGNHQRRNNLSHRNNTPRNNRKRSG. A compositionally biased stretch (basic residues) spans 396 to 413; that stretch reads PKRRYRSRSGNHQRRNNL.

It belongs to the DEAD box helicase family. RhlB subfamily. In terms of assembly, component of the RNA degradosome, which is a multiprotein complex involved in RNA processing and mRNA degradation.

The protein localises to the cytoplasm. It carries out the reaction ATP + H2O = ADP + phosphate + H(+). In terms of biological role, DEAD-box RNA helicase involved in RNA degradation. Has RNA-dependent ATPase activity and unwinds double-stranded RNA. The protein is ATP-dependent RNA helicase RhlB of Photorhabdus laumondii subsp. laumondii (strain DSM 15139 / CIP 105565 / TT01) (Photorhabdus luminescens subsp. laumondii).